Here is a 375-residue protein sequence, read N- to C-terminus: Erythronate-4-phosphate dehydrogenase (375 aa).

Residues S45 and T66 each contribute to the substrate site. Residues D146, T175, 206 to 208 (ASR), and D232 contribute to the NAD(+) site. R208 is a catalytic residue. E237 is an active-site residue. H254 (proton donor) is an active-site residue. G257 contributes to the NAD(+) binding site. Y258 is a substrate binding site.

Belongs to the D-isomer specific 2-hydroxyacid dehydrogenase family. PdxB subfamily. As to quaternary structure, homodimer.

Its subcellular location is the cytoplasm. It carries out the reaction 4-phospho-D-erythronate + NAD(+) = (R)-3-hydroxy-2-oxo-4-phosphooxybutanoate + NADH + H(+). Its pathway is cofactor biosynthesis; pyridoxine 5'-phosphate biosynthesis; pyridoxine 5'-phosphate from D-erythrose 4-phosphate: step 2/5. In terms of biological role, catalyzes the oxidation of erythronate-4-phosphate to 3-hydroxy-2-oxo-4-phosphonooxybutanoate. The sequence is that of Erythronate-4-phosphate dehydrogenase from Photorhabdus laumondii subsp. laumondii (strain DSM 15139 / CIP 105565 / TT01) (Photorhabdus luminescens subsp. laumondii).